We begin with the raw amino-acid sequence, 648 residues long: S-M checkpoint control protein rad4 (648 aa).

BRCT domains are found at residues 2–92 (GSSK…DDGL) and 96–185 (KHFL…YFQL). Positions 242–249 (KRGKKRDR) match the Nuclear localization signal motif. BRCT domains lie at 298 to 384 (NEAK…EHAL) and 392 to 486 (SLVP…SPWA). At Ser-592 the chain carries Phosphoserine. Residues 643 to 648 (RKLRRR) carry the Nuclear localization signal motif.

As to quaternary structure, interacts with drc1/sld2. Interacts (via BRCT1,2 domains) with crb2; a single rad4 molecule interacts simultaneously with both 'Thr-187' phosphorylation sites in a crb2 dimer.

It localises to the nucleus. In terms of biological role, essential component for DNA replication and also the checkpoint control system which couples S and M phases. May directly or indirectly interact with chromatin proteins to form the complex required for the initiation and/or progression of DNA synthesis. Interacts simultaneously with both 'Thr-187' phosphorylation sites in a crb2 dimer for establishing the DNA checkpoint. This chain is S-M checkpoint control protein rad4 (rad4), found in Schizosaccharomyces pombe (strain 972 / ATCC 24843) (Fission yeast).